Reading from the N-terminus, the 597-residue chain is Histidine protein kinase DivJ (597 aa).

6 consecutive transmembrane segments (helical) span residues 40 to 57 (LGWL…LFTA), 62 to 81 (WPVW…SLIF), 91 to 109 (WLLV…LTGG), 110 to 125 (VGGA…VAAA), 137 to 158 (GAAL…GLAP), and 159 to 188 (AAPT…LLIG). A Histidine kinase domain is found at 335–553 (NMSHELRTPL…TVSVRLPVLL (219 aa)). At His-338 the chain carries Phosphohistidine; by autocatalysis. The span at 561–585 (PTPPAAPEAPSAPEPAPTVEEPPPA) shows a compositional bias: pro residues. The interval 561–597 (PTPPAAPEAPSAPEPAPTVEEPPPASLGDNVIAFAPR) is disordered.

Its subcellular location is the cell membrane. It carries out the reaction ATP + protein L-histidine = ADP + protein N-phospho-L-histidine.. Kinase required for the regulation of cell division and differentiation. Is part of a signal transduction pathway, activating PleD by phosphorylation. The chain is Histidine protein kinase DivJ (divJ) from Caulobacter vibrioides (strain ATCC 19089 / CIP 103742 / CB 15) (Caulobacter crescentus).